Consider the following 816-residue polypeptide: Coiled-coil and C2 domain-containing protein 1-like (816 aa).

The span at 1–11 shows a compositional bias: basic and acidic residues; sequence MFSRKKPEPAK. Disordered regions lie at residues 1-135, 157-176, and 186-269; these read MFSR…TFLP, ANAK…RGLK, and AAGK…RQTD. Positions 25 to 47 are enriched in acidic residues; sequence IPDDFDPSAGYGEDDGGDSDLEA. Basic and acidic residues predominate over residues 73–85; that stretch reads DLDKMIADSLRDV. A compositionally biased stretch (acidic residues) spans 86–100; sequence SDDDDDDNLESDPDL. Residues 122–131 show a composition bias toward low complexity; the sequence is PPAASEEPVQ. The segment at 145 to 200 is DM14 1; sequence IKQRLEMYKQAEANAKTAGDSGKARRFGRGLKTLKDLHRQAAAGKSINVDDIPPEV. Residues 220–243 show a composition bias toward pro residues; the sequence is PSTPASPPPVPSRAAPDPPTPGTP. DM14 regions lie at residues 265–317 and 365–419; these read SRQT…MPPP and LQQR…LPVP. A coiled-coil region spans residues 355-382; it reads LAAATNMLEALQQRLEKYQSVEAAAKAE. Positions 418 to 492 are disordered; sequence VPPGFGPLPT…TRTSGNQQKN (75 aa). Residues 424 to 433 show a composition bias toward low complexity; it reads PLPTADAAPV. Pro residues predominate over residues 434–449; it reads APTPSLPTSPTSPPPT. Low complexity predominate over residues 450–471; it reads ASTSAGGTPSSSSATTPTAPRK. The span at 483-492 shows a compositional bias: polar residues; that stretch reads TRTSGNQQKN. Positions 502-556 are DM14 4; it reads LLERQKEFKLAAIEAKKAGEIDQAKEYLKIFKGFDSLLNAASSGLPVDLSTLPVP. The C2 domain occupies 637 to 776; the sequence is RKNEPLPKFH…ETKCEIHDTY (140 aa).

This sequence belongs to the CC2D1 family. As to quaternary structure, interacts (via DM14 domains 1 and 3) with shrb; the interaction is direct and blocks access to the surface involved in shrb polymerization. This interaction may be required for the ESCRT-III complex role in multivesicular body formation.

It is found in the cytoplasm. The protein resides in the cytosol. The protein localises to the apicolateral cell membrane. It localises to the cell cortex. Its subcellular location is the endosome. In terms of biological role, phosphatidyl inositol monophosphate binding protein involved in endosomal protein sorting through regulation of the endosomal sorting required for transport (ESCRT) pathway. Required for full activity of the ESCRT-III complex core component shrb/shrub, probably by preventing its inappropriate polymerisation. Required, but not essential, for the efficient generation of intraluminal vesicles (ILVs) in multivesicular bodies (MVBs). Involved in a late stage of the endosomal pathway targeting transmembrane proteins of the plasma membrane for lysosomal degradation. Plays a critical role in regulation of multiple signal transduction pathways, including the Notch and BMP/decapentaplegic (dpp) signaling pathways, through targeting of membrane bound receptors to multivesicular bodies, isolating them from the cytoplasm and targeting them for lysosomal degradation. Involved in targeting N/Notch for endosomal degradation, negatively regulating the Notch signaling pathway. Regulates Notch signaling in imaginal disk cells and follicle cells during oogenesis and multiple developmental processes, including development of wings, veins, legs, eyes and bristles. Restricts the activity of Notch to the dorsoventral (D/V) boundary of the wing imaginal disk. In external sensory organ development regulates Notch signaling during asymmetric cell division and differentiation of sensory organ precursor cells. May be involved in regulation of apoptosis and cell growth independent of Notch signaling. Involved in targeting tkv for endosomal degradation, negatively regulating the BMP/decapentaplegic (dpp) signaling pathway. Regulates the BMP/dpp signaling pathway in follicle cells during oogenesis, but not in imaginal disk cells during wing development. May be involved in differentiation or morphogenesis of peripodial epithelial cells in the developing imaginal disk. Involved in abscission of germline cells during oogenesis. The chain is Coiled-coil and C2 domain-containing protein 1-like from Drosophila melanogaster (Fruit fly).